The chain runs to 329 residues: uncharacterized protein (329 aa).

The disordered stretch occupies residues 284 to 303; the sequence is SGGGHSEAGGLNAPYDKSKS.

This is an uncharacterized protein from Methanocaldococcus jannaschii (strain ATCC 43067 / DSM 2661 / JAL-1 / JCM 10045 / NBRC 100440) (Methanococcus jannaschii).